Consider the following 496-residue polypeptide: ATP synthase subunit beta (496 aa).

155–162 (GGAGVGKT) is an ATP binding site.

Belongs to the ATPase alpha/beta chains family. As to quaternary structure, F-type ATPases have 2 components, CF(1) - the catalytic core - and CF(0) - the membrane proton channel. CF(1) has five subunits: alpha(3), beta(3), gamma(1), delta(1), epsilon(1). CF(0) has three main subunits: a(1), b(2) and c(9-12). The alpha and beta chains form an alternating ring which encloses part of the gamma chain. CF(1) is attached to CF(0) by a central stalk formed by the gamma and epsilon chains, while a peripheral stalk is formed by the delta and b chains.

The protein localises to the cell membrane. It catalyses the reaction ATP + H2O + 4 H(+)(in) = ADP + phosphate + 5 H(+)(out). Its function is as follows. Produces ATP from ADP in the presence of a proton gradient across the membrane. The catalytic sites are hosted primarily by the beta subunits. This chain is ATP synthase subunit beta, found in Karelsulcia muelleri (strain GWSS) (Sulcia muelleri).